A 424-amino-acid polypeptide reads, in one-letter code: UPF0229 protein PC1_1960 (424 aa).

Positions 46-109 (IESGESVSIP…GQGDASKDGE (64 aa)) are disordered. Residues 77–90 (PGNDHFVQNDKIER) show a composition bias toward basic and acidic residues. Gly residues predominate over residues 92–101 (QGGGGGGSGQ).

This sequence belongs to the UPF0229 family.

The chain is UPF0229 protein PC1_1960 from Pectobacterium carotovorum subsp. carotovorum (strain PC1).